The sequence spans 397 residues: Homocitrate synthase AksA (397 aa).

The Pyruvate carboxyltransferase domain maps to 19 to 270 (VIVYDTTLRD…DPGFNTEVLA (252 aa)).

It belongs to the alpha-IPM synthase/homocitrate synthase family.

It carries out the reaction acetyl-CoA + 2-oxoglutarate + H2O = (2R)-homocitrate + CoA + H(+). It catalyses the reaction 2-oxoadipate + acetyl-CoA + H2O = (R)-dihomocitrate + CoA + H(+). The enzyme catalyses 2-oxoheptanedioate + acetyl-CoA + H2O = (R)-trihomocitrate + CoA + H(+). It functions in the pathway organic acid metabolism; 2-oxosuberate biosynthesis. Catalyzes the condensation of alpha-ketoglutarate and acetyl-CoA to form (R)-homocitrate. Can also catalyze the condensation of alpha-ketoadipate with acetyl-CoA to form (R)-homo(2)citrate, and the condensation of alpha-ketopimelate with acetyl-CoA to form (R)-homo(3)citrate. These reactions are part of the biosynthesis pathway of coenzyme B and biotin. The chain is Homocitrate synthase AksA (aksA) from Methanopyrus kandleri (strain AV19 / DSM 6324 / JCM 9639 / NBRC 100938).